Reading from the N-terminus, the 370-residue chain is Putative agmatine deiminase (370 aa).

The active-site Amidino-cysteine intermediate is Cys-361.

The protein belongs to the agmatine deiminase family.

It carries out the reaction agmatine + H2O = N-carbamoylputrescine + NH4(+). The protein is Putative agmatine deiminase of Shewanella baltica (strain OS155 / ATCC BAA-1091).